The chain runs to 400 residues: MGKQQPISQRKLLGVAGLGWLFDAMDVGILSFIIAALHVEWNLSPEEMKWIGSVNSIGMAAGAFLFGLLADRIGRKKVFIITLLCFSIGSGISAFVTSLSAFLILRFVIGMGLGGELPVASTLVSEAVVPEKRGRVIVLLESFWAVGWLAAALISYFVIPSFGWQAALLLTALTAFYALYLRTSLPDSPKYESLSAKKRSMWENVKSVWARQYIRPTVMLSIVWFCVVFSYYGMFLWLPSVMLLKGFSMIQSFEYVLLMTLAQLPGYFSAAWLIEKAGRKWILVVYLIGTAGSAYFFGTADSLSLLLTAGVLLSFFNLGAWGVLYAYTPEQYPTAIRATGSGTTAAFGRIGGIFGPLLVGTLAARHISFSVIFSIFCIAILLAVACILIMGKETKQTELE.

The Cytoplasmic segment spans residues 1–14; it reads MGKQQPISQRKLLG. The chain crosses the membrane as a helical span at residues 15-35; it reads VAGLGWLFDAMDVGILSFIIA. The Extracellular segment spans residues 36-49; that stretch reads ALHVEWNLSPEEMK. The chain crosses the membrane as a helical span at residues 50-70; it reads WIGSVNSIGMAAGAFLFGLLA. Topologically, residues 71 to 77 are cytoplasmic; sequence DRIGRKK. The next 2 membrane-spanning stretches (helical) occupy residues 78-98 and 99-119; these read VFII…FVTS and LSAF…ELPV. Over 120–142 the chain is Cytoplasmic; sequence ASTLVSEAVVPEKRGRVIVLLES. The helical transmembrane segment at 143-163 threads the bilayer; that stretch reads FWAVGWLAAALISYFVIPSFG. At 164–165 the chain is on the extracellular side; the sequence is WQ. Residues 166-186 form a helical membrane-spanning segment; sequence AALLLTALTAFYALYLRTSLP. Over 187–217 the chain is Cytoplasmic; sequence DSPKYESLSAKKRSMWENVKSVWARQYIRPT. Residues 218–238 traverse the membrane as a helical segment; that stretch reads VMLSIVWFCVVFSYYGMFLWL. The Extracellular segment spans residues 239–253; the sequence is PSVMLLKGFSMIQSF. Residues 254–274 traverse the membrane as a helical segment; sequence EYVLLMTLAQLPGYFSAAWLI. The Cytoplasmic portion of the chain corresponds to 275–280; sequence EKAGRK. Residues 281-301 form a helical membrane-spanning segment; sequence WILVVYLIGTAGSAYFFGTAD. Over 302–304 the chain is Extracellular; that stretch reads SLS. Residues 305 to 325 traverse the membrane as a helical segment; it reads LLLTAGVLLSFFNLGAWGVLY. Over 326-343 the chain is Cytoplasmic; the sequence is AYTPEQYPTAIRATGSGT. Residues 344 to 364 form a helical membrane-spanning segment; it reads TAAFGRIGGIFGPLLVGTLAA. The Extracellular portion of the chain corresponds to 365–370; sequence RHISFS. The helical transmembrane segment at 371–391 threads the bilayer; sequence VIFSIFCIAILLAVACILIMG. Over 392-400 the chain is Cytoplasmic; the sequence is KETKQTELE.

This sequence belongs to the major facilitator superfamily. Sugar transporter (TC 2.A.1.1) family.

It is found in the cell membrane. Its function is as follows. Probably involved in the uptake of amidated and deamidated forms of niacin. Increases the growth rate of E.coli that is unable to make niacin de novo; confers increased sensitivity to the toxic niacin analog 6-amino-nicotinamide to wild-type E.coli. There is probably another mechanism for niacin uptake. The polypeptide is Putative niacin/nicotinamide transporter NiaP (Bacillus subtilis (strain 168)).